A 274-amino-acid chain; its full sequence is Dermonecrotic toxin SdSicTox-betaIIB1bv (274 aa).

Residue His5 is part of the active site. Mg(2+) is bound by residues Glu25 and Asp27. His41 (nucleophile) is an active-site residue. Cystine bridges form between Cys45–Cys51 and Cys47–Cys190. Asp85 lines the Mg(2+) pocket.

The protein belongs to the arthropod phospholipase D family. Class II subfamily. The cofactor is Mg(2+). As to expression, expressed by the venom gland.

The protein localises to the secreted. It carries out the reaction an N-(acyl)-sphingosylphosphocholine = an N-(acyl)-sphingosyl-1,3-cyclic phosphate + choline. The catalysed reaction is an N-(acyl)-sphingosylphosphoethanolamine = an N-(acyl)-sphingosyl-1,3-cyclic phosphate + ethanolamine. The enzyme catalyses a 1-acyl-sn-glycero-3-phosphocholine = a 1-acyl-sn-glycero-2,3-cyclic phosphate + choline. It catalyses the reaction a 1-acyl-sn-glycero-3-phosphoethanolamine = a 1-acyl-sn-glycero-2,3-cyclic phosphate + ethanolamine. Dermonecrotic toxins cleave the phosphodiester linkage between the phosphate and headgroup of certain phospholipids (sphingolipid and lysolipid substrates), forming an alcohol (often choline) and a cyclic phosphate. This toxin acts on sphingomyelin (SM). It may also act on ceramide phosphoethanolamine (CPE), lysophosphatidylcholine (LPC) and lysophosphatidylethanolamine (LPE), but not on lysophosphatidylserine (LPS), and lysophosphatidylglycerol (LPG). It acts by transphosphatidylation, releasing exclusively cyclic phosphate products as second products. Induces dermonecrosis, hemolysis, increased vascular permeability, edema, inflammatory response, and platelet aggregation. This is Dermonecrotic toxin SdSicTox-betaIIB1bv from Sicarius cf. damarensis (strain GJB-2008) (Six-eyed sand spider).